The sequence spans 177 residues: Large ribosomal subunit protein uL6 (177 aa).

This sequence belongs to the universal ribosomal protein uL6 family. As to quaternary structure, part of the 50S ribosomal subunit.

In terms of biological role, this protein binds to the 23S rRNA, and is important in its secondary structure. It is located near the subunit interface in the base of the L7/L12 stalk, and near the tRNA binding site of the peptidyltransferase center. This is Large ribosomal subunit protein uL6 from Pectobacterium carotovorum subsp. carotovorum (strain PC1).